A 605-amino-acid chain; its full sequence is DNA primase (605 aa).

The CHC2-type zinc finger occupies 38–62 (CPFHDEKTPSFTVSEDKQICHCFGC). Residues 260–341 (DEIVLLEGFM…NVFVIQLPSG (82 aa)) form the Toprim domain. The Mg(2+) site is built by glutamate 266, aspartate 310, and aspartate 312.

Belongs to the DnaG primase family. As to quaternary structure, monomer. Interacts with DnaB. It depends on Zn(2+) as a cofactor. Mg(2+) is required as a cofactor.

It catalyses the reaction ssDNA + n NTP = ssDNA/pppN(pN)n-1 hybrid + (n-1) diphosphate.. Its function is as follows. RNA polymerase that catalyzes the synthesis of short RNA molecules used as primers for DNA polymerase during DNA replication. This is DNA primase from Staphylococcus aureus (strain Mu50 / ATCC 700699).